Here is a 140-residue protein sequence, read N- to C-terminus: UPF0102 protein alr1796 (140 aa).

It belongs to the UPF0102 family.

This is UPF0102 protein alr1796 from Nostoc sp. (strain PCC 7120 / SAG 25.82 / UTEX 2576).